Consider the following 208-residue polypeptide: Imidazole glycerol phosphate synthase subunit HisH (208 aa).

The Glutamine amidotransferase type-1 domain occupies asparagine 2 to leucine 208. Catalysis depends on cysteine 85, which acts as the Nucleophile. Active-site residues include histidine 190 and glutamate 192.

As to quaternary structure, heterodimer of HisH and HisF.

Its subcellular location is the cytoplasm. It carries out the reaction 5-[(5-phospho-1-deoxy-D-ribulos-1-ylimino)methylamino]-1-(5-phospho-beta-D-ribosyl)imidazole-4-carboxamide + L-glutamine = D-erythro-1-(imidazol-4-yl)glycerol 3-phosphate + 5-amino-1-(5-phospho-beta-D-ribosyl)imidazole-4-carboxamide + L-glutamate + H(+). The catalysed reaction is L-glutamine + H2O = L-glutamate + NH4(+). It participates in amino-acid biosynthesis; L-histidine biosynthesis; L-histidine from 5-phospho-alpha-D-ribose 1-diphosphate: step 5/9. IGPS catalyzes the conversion of PRFAR and glutamine to IGP, AICAR and glutamate. The HisH subunit catalyzes the hydrolysis of glutamine to glutamate and ammonia as part of the synthesis of IGP and AICAR. The resulting ammonia molecule is channeled to the active site of HisF. The polypeptide is Imidazole glycerol phosphate synthase subunit HisH (Pelagibacter ubique (strain HTCC1062)).